Here is a 532-residue protein sequence, read N- to C-terminus: Protein tweety homolog 2 (532 aa).

Topologically, residues 1 to 44 (MPAARVEYIAPWWVVWLHSVPHLGLRLQRVDSTFSPGDETYQES) are extracellular. Residues 45-65 (LLFLGVLAAIGLGLNLIFLTV) traverse the membrane as a helical segment. The Cytoplasmic portion of the chain corresponds to 66-87 (YLVCTCCCRRDHTVQTKQQESC). A helical membrane pass occupies residues 88–108 (CVTWTAVVAGLLCCAAVGVGF). Topologically, residues 109–213 (YGNSETNDGM…QTAYVEYYRW (105 aa)) are extracellular. Ca(2+) contacts are provided by Glu113 and Asp116. Asn129 carries N-linked (GlcNAc...) asparagine glycosylation. The short motif at 164 to 166 (RGD) is the RGD element. Residue Thr199 is modified to Phosphothreonine. A helical membrane pass occupies residues 214-234 (LSYLLLFILDLVICLVTCLGL). Residues 235–240 (ARRSKC) are Cytoplasmic-facing. Residues 241-261 (LLASMLCCGILTLILSWASLA) traverse the membrane as a helical segment. The Extracellular segment spans residues 262-385 (ADAAAAVGTS…DALTGICYDG (124 aa)). 2 cysteine pairs are disulfide-bonded: Cys274–Cys382 and Cys300–Cys367. N-linked (GlcNAc...) asparagine glycosylation is found at Asn283 and Asn352. The chain crosses the membrane as a helical span at residues 386 to 406 (IEGLLFLGLFSLLAALAFSTL). At 407–532 (TCAGPRAWKY…EHLRHYEFPS (126 aa)) the chain is on the cytoplasmic side. Phosphoserine is present on Ser504. A PY-motif; mediates interaction with NEDD4L motif is present at residues 506 to 509 (PPTY).

It belongs to the tweety family. As to quaternary structure, forms cis-homodimers in the presence of Ca(+2) and forms monomers and trans-dimers in the absence of Ca(2+). Interacts with NEDD4L. In terms of processing, ubiquitinated by NEDD4L, leading to its proteasomal degradation.

It localises to the cell membrane. The enzyme catalyses chloride(in) = chloride(out). The catalysed reaction is L-glutamate(out) = L-glutamate(in). Its activity is regulated as follows. Inhibited by (4-[(2-butyl-6,7-dichloro-2- cyclopentyl-2,3-dihydro-1-oxo-1H-inden-5-yl)oxy]butanoic acid). Its function is as follows. Calcium-independent, swelling-dependent volume-regulated anion channel (VRAC-swell) which plays a pivotal role in the process of regulatory volume decrease (RVD) in the brain through the efflux of anions like chloride and organic osmolytes like glutamate. Probable large-conductance Ca(2+)-activated chloride channel. In Mus musculus (Mouse), this protein is Protein tweety homolog 2 (Ttyh2).